Here is a 434-residue protein sequence, read N- to C-terminus: SARSAAAEERSVNSSTMVAQQKNLEGYVGFANLPNQVYRKSVKRGFEFTLMVVGESGLGKSTLINSLFLTDLYSPEYPGPSHRIKKTVQVEQSKVLIKEGGVQLLLTIVDTPGFGDAVDNSNCWQPVIDYIDSKFEDYLNAESRVNRRQMPDNRVQCCLYFIAPSGHGLKPLDIEFMKRLHEKVNIIPLIAKADTLTPEECQQFKKQIMKEIQEHKIKIYEFPETDDEEENKLVKKIKDRLPLAVVGSNTIIEVNGKRVRGRQYPWGVAEVENGEHCDFTILRNMLIRTHMQDLKDVTNNVHYENYRSRKLAAVTYNGVDNNKNKGQLTKSPLAQMEEERREHVAKMKKMEMEMEQVFEMKVKEKVQKLKDSEAELQRRHEQMKKNLEAQHKGLEEKRRQFEDEKANWEAQQRILEQQNSSRTLEKNKKKGKIF.

A Phosphotyrosine modification is found at Tyr-27. Residues 44–313 form the Septin-type G domain; the sequence is RGFEFTLMVV…ENYRSRKLAA (270 aa). The tract at residues 44 to 314 is interaction with SEPTIN12; it reads RGFEFTLMVV…NYRSRKLAAV (271 aa). The G1 motif stretch occupies residues 54 to 61; sequence GESGLGKS. 54 to 61 is a binding site for GTP; that stretch reads GESGLGKS. Ser-74 is modified (phosphoserine). GTP is bound by residues Thr-87, Gly-113, and 192 to 200; that span reads KADTLTPEE. The interval 110–113 is G3 motif; the sequence is DTPG. The segment at 191–194 is G4 motif; that stretch reads AKAD. Thr-225 bears the Phosphothreonine mark. The GTP site is built by Gly-247 and Arg-262. Residues 329–434 adopt a coiled-coil conformation; sequence TKSPLAQMEE…EKNKKKGKIF (106 aa). Ser-331 is subject to Phosphoserine. Position 370 is an N6-acetyllysine (Lys-370). A compositionally biased stretch (basic and acidic residues) spans 377–407; it reads QRRHEQMKKNLEAQHKGLEEKRRQFEDEKAN. The interval 377–434 is disordered; it reads QRRHEQMKKNLEAQHKGLEEKRRQFEDEKANWEAQQRILEQQNSSRTLEKNKKKGKIF. Ser-421 carries the phosphoserine modification. Thr-423 carries the phosphothreonine modification.

Belongs to the TRAFAC class TrmE-Era-EngA-EngB-Septin-like GTPase superfamily. Septin GTPase family. In terms of assembly, septins polymerize into heterooligomeric protein complexes that form filaments, and associate with cellular membranes, actin filaments and microtubules. GTPase activity is required for filament formation. Filaments are assembled from asymmetrical heterotrimers, composed of SEPTIN2, SEPTIN6 and SEPTIN7 that associate head-to-head to form a hexameric unit. Within the trimer, directly interacts with SEPTIN6, while interaction with SEPTIN2 seems indirect. In the absence of SEPTIN6, forms homodimers. Interacts directly with CENPE and links CENPE to septin filaments composed of SEPTIN2, SEPTIN6 and SEPTIN7. Interacts with SEPTIN5, SEPTIN8, SEPTIN9 and SEPTIN11. Component of a septin core octameric complex consisting of SEPTIN12, SEPTIN7, SEPTIN6 and SEPTIN2 or SEPTIN4 in the order 12-7-6-2-2-6-7-12 or 12-7-6-4-4-6-7-12 and located in the sperm annulus; the SEPTIN12:SEPTIN7 association is mediated by the respective GTP-binding domains.

It localises to the cytoplasm. It is found in the chromosome. Its subcellular location is the centromere. The protein resides in the kinetochore. The protein localises to the cytoskeleton. It localises to the spindle. It is found in the cleavage furrow. Its subcellular location is the midbody. The protein resides in the cilium axoneme. The protein localises to the cell projection. It localises to the cilium. It is found in the flagellum. Its function is as follows. Filament-forming cytoskeletal GTPase. Required for normal organization of the actin cytoskeleton. Required for normal progress through mitosis. Involved in cytokinesis. Required for normal association of CENPE with the kinetochore. Plays a role in ciliogenesis and collective cell movements. Forms a filamentous structure with SEPTIN12, SEPTIN6, SEPTIN2 and probably SEPTIN4 at the sperm annulus which is required for the structural integrity and motility of the sperm tail during postmeiotic differentiation. The polypeptide is Septin-7 (Pan troglodytes (Chimpanzee)).